The sequence spans 844 residues: Translation initiation factor IF-2 (844 aa).

Residues 1–11 (MTEDVKADAPK) are compositionally biased toward basic and acidic residues. Disordered regions lie at residues 1–48 (MTED…VKTD) and 79–249 (RLEA…GTAL). Positions 21-30 (TTVSSTTTGG) are enriched in low complexity. The segment covering 79–161 (RLEAEKAATK…AAEEAKRYAE (83 aa)) has biased composition (basic and acidic residues). Positions 162–175 (ADDSDNESSSEDYS) are enriched in acidic residues. The span at 200 to 210 (RGKNKVAKAKK) shows a compositional bias: basic residues. Residues 211–237 (GGRDDENSKNSKNERESNRKNQKDAKF) show a composition bias toward basic and acidic residues. A tr-type G domain is found at 343 to 513 (TRAPVVTIMG…LLQSEVLELT (171 aa)). Positions 352–359 (GHVDHGKT) are G1. A GTP-binding site is contributed by 352 to 359 (GHVDHGKT). The G2 stretch occupies residues 377 to 381 (GITQH). The segment at 399–402 (DTPG) is G3. Residues 399 to 403 (DTPGH) and 453 to 456 (NKID) each bind GTP. The segment at 453–456 (NKID) is G4. The G5 stretch occupies residues 489-491 (SAK).

This sequence belongs to the TRAFAC class translation factor GTPase superfamily. Classic translation factor GTPase family. IF-2 subfamily.

The protein resides in the cytoplasm. Functionally, one of the essential components for the initiation of protein synthesis. Protects formylmethionyl-tRNA from spontaneous hydrolysis and promotes its binding to the 30S ribosomal subunits. Also involved in the hydrolysis of GTP during the formation of the 70S ribosomal complex. The sequence is that of Translation initiation factor IF-2 from Haemophilus influenzae (strain 86-028NP).